Reading from the N-terminus, the 1005-residue chain is Translocated actin-recruiting phosphoprotein (1005 aa).

A compositionally biased stretch (polar residues) spans 1–10; it reads MTNSISGDQP. 7 disordered regions span residues 1–36, 74–128, 191–214, 343–365, 611–645, 661–748, and 792–847; these read MTNSISGDQPTVTTFTSSTTSASGASGSLGASSVST, PTVT…DYEP, SIDDSSTSDPENTSGGAAALNSLR, SIDDSSTSDPENTSGGAAALNSL, WGTQAGPSSEDDGISFSNETPGAGPAAAPSPTPSS, NIRD…DGPA, and TGTS…TSLM. 2 stretches are compositionally biased toward low complexity: residues 11–36 and 74–121; these read TVTTFTSSTTSASGASGSLGASSVST and PTVT…SSDH. Polar residues-rich tracts occupy residues 191–205 and 343–357; these read SIDDSSTSDPENTSG. Composition is skewed to low complexity over residues 661–700, 715–734, and 831–846; these read NIRDTNVNTTNTTPTTQSTDASTDTSDIDNINTNNQTDDI, GDISETESSSGDDSGSVSSS, and STTTLRTGTGATTTSL.

Belongs to the chlamydial CPn_0572/CT_456/TC_0741 family. In terms of processing, phosphorylated on a tyrosine on attachment to the host cell. Tyrosine phosphorylation is temporally and spatially associated with recruitment of actin to the site of chlamydial entry. Phosphorylated Tarp seems to remain cytoplasmically exposed on the inclusion membrane at one side of internalized elementary bodies for several hours after entry.

The protein resides in the secreted. In terms of biological role, appears to initiate or participate in signaling events that regulate the actin recruitment, which ultimately leads to internalization. The chain is Translocated actin-recruiting phosphoprotein (tarP) from Chlamydia trachomatis serovar L2 (strain ATCC VR-902B / DSM 19102 / 434/Bu).